The following is an 831-amino-acid chain: DNA ligase (831 aa).

Residues 34 to 38, 83 to 84, and E114 contribute to the NAD(+) site; these read DADYD and SL. The active-site N6-AMP-lysine intermediate is K116. NAD(+) is bound by residues R137, E174, K291, and K315. Positions 409, 412, 427, and 433 each coordinate Zn(2+). One can recognise a BRCT domain in the interval 749-831; that stretch reads AHTAPLNGQS…LAFLEQYSAQ (83 aa).

It belongs to the NAD-dependent DNA ligase family. LigA subfamily. Requires Mg(2+) as cofactor. The cofactor is Mn(2+).

The catalysed reaction is NAD(+) + (deoxyribonucleotide)n-3'-hydroxyl + 5'-phospho-(deoxyribonucleotide)m = (deoxyribonucleotide)n+m + AMP + beta-nicotinamide D-nucleotide.. In terms of biological role, DNA ligase that catalyzes the formation of phosphodiester linkages between 5'-phosphoryl and 3'-hydroxyl groups in double-stranded DNA using NAD as a coenzyme and as the energy source for the reaction. It is essential for DNA replication and repair of damaged DNA. This Xylella fastidiosa (strain M23) protein is DNA ligase.